A 157-amino-acid polypeptide reads, in one-letter code: Ribonuclease (157 aa).

A signal peptide spans 1–34 (MMKMEGIALKKRLSWISVCLLVLVSAAGMLFSTA). The propeptide occupies 35–47 (AKTETSSHKAHTE). Glu120 (proton acceptor) is an active-site residue. The Proton donor role is filled by His149.

The protein belongs to the ribonuclease N1/T1 family.

The protein localises to the secreted. Functionally, hydrolyzes phosphodiester bonds in RNA, poly- and oligoribonucleotides resulting in 3'-nucleoside monophosphates via 2',3'-cyclophosphate intermediates. The sequence is that of Ribonuclease from Bacillus amyloliquefaciens (Bacillus velezensis).